We begin with the raw amino-acid sequence, 304 residues long: Xylanase inhibitor protein 1 (304 aa).

Residues 1–29 (MVALGRRSWLVPLAMVLAVSSCLAGPAMA) form the signal peptide. The GH18 domain occupies 34 to 304 (GQMTVFWGRN…GYGKTVKYWA (271 aa)). 2 disulfide bridges follow: cysteine 53–cysteine 93 and cysteine 190–cysteine 219.

Belongs to the glycosyl hydrolase 18 family. Xylanase inhibitor subfamily. Binds to fungal GH11 xylanases. As to expression, constitutively expressed in shoots.

It localises to the secreted. Its function is as follows. Fungal xylanase inhibitor. Possesses competitive inhibiting activity against fungal endo-1,4-beta-D-xylanases belonging to glycoside hydrolase family 11 (GH11). May function in plant defense against secreted fungal pathogen xylanases. Is similar to class III chitinases, but does not exhibit chitinase activity. In Oryza sativa subsp. japonica (Rice), this protein is Xylanase inhibitor protein 1.